Consider the following 357-residue polypeptide: Protein MGF 360-8L (357 aa).

It belongs to the asfivirus MGF 360 family.

In terms of biological role, plays a role in virus cell tropism, and may be required for efficient virus replication in macrophages. The sequence is that of Protein MGF 360-8L from African swine fever virus (isolate Tick/South Africa/Pretoriuskop Pr4/1996) (ASFV).